A 226-amino-acid chain; its full sequence is PKHD-type hydroxylase HNE_2117 (226 aa).

A Fe2OG dioxygenase domain is found at 78–178 (TVLTPRFNRY…RLASFLWTQS (101 aa)). Fe cation-binding residues include His-96, Asp-98, and His-159. Arg-169 is a 2-oxoglutarate binding site.

Fe(2+) serves as cofactor. The cofactor is L-ascorbate.

The chain is PKHD-type hydroxylase HNE_2117 from Hyphomonas neptunium (strain ATCC 15444).